The chain runs to 398 residues: Dual-specificity RNA methyltransferase RlmN (398 aa).

The active-site Proton acceptor is the Glu-100. The region spanning 106–345 (DGDRGTLCVS…TTVRTTRGDD (240 aa)) is the Radical SAM core domain. The cysteines at positions 113 and 350 are disulfide-linked. Cys-120, Cys-124, and Cys-127 together coordinate [4Fe-4S] cluster. Residues 174–175 (GE), Ser-206, 228–230 (SLH), and Asn-307 contribute to the S-adenosyl-L-methionine site. Cys-350 functions as the S-methylcysteine intermediate in the catalytic mechanism.

Belongs to the radical SAM superfamily. RlmN family. Requires [4Fe-4S] cluster as cofactor.

The protein localises to the cytoplasm. The enzyme catalyses adenosine(2503) in 23S rRNA + 2 reduced [2Fe-2S]-[ferredoxin] + 2 S-adenosyl-L-methionine = 2-methyladenosine(2503) in 23S rRNA + 5'-deoxyadenosine + L-methionine + 2 oxidized [2Fe-2S]-[ferredoxin] + S-adenosyl-L-homocysteine. The catalysed reaction is adenosine(37) in tRNA + 2 reduced [2Fe-2S]-[ferredoxin] + 2 S-adenosyl-L-methionine = 2-methyladenosine(37) in tRNA + 5'-deoxyadenosine + L-methionine + 2 oxidized [2Fe-2S]-[ferredoxin] + S-adenosyl-L-homocysteine. In terms of biological role, specifically methylates position 2 of adenine 2503 in 23S rRNA and position 2 of adenine 37 in tRNAs. m2A2503 modification seems to play a crucial role in the proofreading step occurring at the peptidyl transferase center and thus would serve to optimize ribosomal fidelity. The protein is Dual-specificity RNA methyltransferase RlmN of Saccharophagus degradans (strain 2-40 / ATCC 43961 / DSM 17024).